The sequence spans 386 residues: Cytotoxic granule associated RNA binding protein TIA1 (386 aa).

N-acetylmethionine is present on Met-1. RRM domains are found at residues 7–83, 106–184, and 214–286; these read KTLY…WATT, FHVF…WATR, and CTVY…WGKE. Residues 355–376 form a disordered region; that stretch reads GPNYSVPPPQGQNGSMLPSQPA.

As to quaternary structure, homooligomer; homooligomerization is induced by Zn(2+). Interacts with FASTK; the interactions leads to its phosphorylation. Interacts (via RRM1 and the C-terminal glutamine-rich (Q) sequence) with SNRPC/U1-C (via N-terminus); thereby facilitating spliceosomal U1 snRNP recruitment to 5' splice sites. Post-translationally, phosphorylatedby FASTK; phosphorylation occurs after FAS ligation in FAS-mediated apoptosis and before DNA fragmentation.

It localises to the nucleus. The protein localises to the cytoplasm. Its subcellular location is the stress granule. RNA-binding protein involved in the regulation of alternative pre-RNA splicing and mRNA translation by binding to uridine-rich (U-rich) RNA sequences. Binds to U-rich sequences immediately downstream from a 5' splice sites in a uridine-rich small nuclear ribonucleoprotein (U snRNP)-dependent fashion, thereby modulating alternative pre-RNA splicing. Preferably binds to the U-rich IAS1 sequence in a U1 snRNP-dependent manner; this binding is optimal if a 5' splice site is adjacent to IAS1. Activates the use of heterologous 5' splice sites; the activation depends on the intron sequence downstream from the 5' splice site, with a preference for a downstream U-rich sequence. By interacting with SNRPC/U1-C, promotes recruitment and binding of spliceosomal U1 snRNP to 5' splice sites followed by U-rich sequences, thereby facilitating atypical 5' splice site recognition by U1 snRNP. Activates splicing of alternative exons with weak 5' splice sites followed by a U-rich stretch on its own pre-mRNA and on TIAR mRNA. Acts as a modulator of alternative splicing for the apoptotic FAS receptor, thereby promoting apoptosis. Binds to the 5' splice site region of FAS intron 5 to promote accumulation of transcripts that include exon 6 at the expense of transcripts in which exon 6 is skipped, thereby leading to the transcription of a membrane-bound apoptotic FAS receptor, which promotes apoptosis. Binds to a conserved AU-rich cis element in COL2A1 intron 2 and modulates alternative splicing of COL2A1 exon 2. Also binds to the equivalent AT-rich element in COL2A1 genomic DNA, and may thereby be involved in the regulation of transcription. Involved in the repression of mRNA translation by binding to AU-rich elements (AREs) located in mRNA 3' untranslated regions (3' UTRs), including target ARE-bearing mRNAs encoding TNF and PTGS2. Also participates in the cellular response to environmental stress, by acting downstream of the stress-induced phosphorylation of EIF2S1/EIF2A to promote the recruitment of untranslated mRNAs to cytoplasmic stress granules (SGs), leading to stress-induced translational arrest. Formation and recruitment to SGs is regulated by Zn(2+). Possesses nucleolytic activity against cytotoxic lymphocyte target cells. The protein is Cytotoxic granule associated RNA binding protein TIA1 (Tia1) of Mus musculus (Mouse).